We begin with the raw amino-acid sequence, 251 residues long: Cytochrome c oxidase subunit 2 (251 aa).

A propeptide spans 1–15 (MLDLLRLQLTTFIMN) (removed in mature form). Topologically, residues 16-30 (DVPTPYACYFQDSAT) are mitochondrial intermembrane. Residues 31 to 64 (PNQEGILELHDNIMFYLLVILGLVSWMLYTIVMT) form a helical membrane-spanning segment. Residues 65-78 (YSKNPIAYKYIKHG) are Mitochondrial matrix-facing. A helical transmembrane segment spans residues 79–108 (QTIEVIWTIFPAVILLIIAFPSFILLYLCD). Residues 109–251 (EVISPAMTIK…PKFLEWLNEQ (143 aa)) are Mitochondrial intermembrane-facing. Positions 186, 221, 223, 225, 229, and 232 each coordinate Cu cation. Glu-223 lines the Mg(2+) pocket.

The protein belongs to the cytochrome c oxidase subunit 2 family. In terms of assembly, component of the cytochrome c oxidase (complex IV, CIV), a multisubunit enzyme composed of 12 subunits. The complex is composed of a catalytic core of 3 subunits COX1, COX2 and COX3, encoded in the mitochondrial DNA, and 9 supernumerary subunits COX4, COX5A (or COX5B), COX6, COX7, COX8, COX9, COX12, COX13 and COX26, which are encoded in the nuclear genome. The complex exists as a monomer or a dimer and forms supercomplexes (SCs) in the inner mitochondrial membrane with a dimer of ubiquinol-cytochrome c oxidoreductase (cytochrome b-c1 complex, complex III, CIII), resulting in 2 different assemblies (supercomplexes III(2)IV and III(2)IV(2)). Cu cation serves as cofactor. Post-translationally, the N-terminal sequence of COX2 is processed by IMP1.

The protein localises to the mitochondrion inner membrane. It carries out the reaction 4 Fe(II)-[cytochrome c] + O2 + 8 H(+)(in) = 4 Fe(III)-[cytochrome c] + 2 H2O + 4 H(+)(out). Component of the cytochrome c oxidase, the last enzyme in the mitochondrial electron transport chain which drives oxidative phosphorylation. The respiratory chain contains 3 multisubunit complexes succinate dehydrogenase (complex II, CII), ubiquinol-cytochrome c oxidoreductase (cytochrome b-c1 complex, complex III, CIII) and cytochrome c oxidase (complex IV, CIV), that cooperate to transfer electrons derived from NADH and succinate to molecular oxygen, creating an electrochemical gradient over the inner membrane that drives transmembrane transport and the ATP synthase. Cytochrome c oxidase is the component of the respiratory chain that catalyzes the reduction of oxygen to water. Electrons originating from reduced cytochrome c in the intermembrane space (IMS) are transferred via the dinuclear copper A center (CU(A)) of COX2 and heme A of COX1 to the active site in COX1, a binuclear center (BNC) formed by heme A3 and copper B (CU(B)). The BNC reduces molecular oxygen to 2 water molecules unsing 4 electrons from cytochrome c in the IMS and 4 protons from the mitochondrial matrix. COX2 is a catalytic core subunit which transfers the electrons from cytochrome c via its dinuclear copper A center (CU(A)) to the BNC of the COX1. The chain is Cytochrome c oxidase subunit 2 (COX2) from Saccharomyces cerevisiae (strain ATCC 204508 / S288c) (Baker's yeast).